A 492-amino-acid chain; its full sequence is N-succinylglutamate 5-semialdehyde dehydrogenase (492 aa).

Residue G220–G225 coordinates NAD(+). Catalysis depends on residues E243 and C277.

Belongs to the aldehyde dehydrogenase family. AstD subfamily.

It catalyses the reaction N-succinyl-L-glutamate 5-semialdehyde + NAD(+) + H2O = N-succinyl-L-glutamate + NADH + 2 H(+). It functions in the pathway amino-acid degradation; L-arginine degradation via AST pathway; L-glutamate and succinate from L-arginine: step 4/5. Functionally, catalyzes the NAD-dependent reduction of succinylglutamate semialdehyde into succinylglutamate. This chain is N-succinylglutamate 5-semialdehyde dehydrogenase, found in Escherichia coli (strain 55989 / EAEC).